A 60-amino-acid polypeptide reads, in one-letter code: Homeobox protein CHOX-CAD2 (60 aa).

The segment at residues 1 to 60 is a DNA-binding region (homeobox); that stretch reads KEKYRVVYTDHQRLELEKEFHCNRYITIRRKSELAVNLGLSERQVKSWFQNRRAKERKII.

It belongs to the Caudal homeobox family.

The protein localises to the nucleus. The protein is Homeobox protein CHOX-CAD2 (CHOX-CAD2) of Gallus gallus (Chicken).